Reading from the N-terminus, the 855-residue chain is E3 ubiquitin-protein ligase TRIM71 (855 aa).

Ala2 bears the N-acetylalanine mark. Residues 12–94 (CLLCKEMCGS…ALKLRCPVCD (83 aa)) form an RING-type zinc finger. Residues 26–42 (SSSSSASSSSSQTSTSS) are compositionally biased toward low complexity. Disordered stretches follow at residues 26 to 48 (SSSS…GGGP) and 126 to 177 (ADEP…SPGS). The span at 135–145 (RAGGGPGGAGG) shows a compositional bias: gly residues. Residues 147–157 (SNHRHHAHHPA) are compositionally biased toward basic residues. Residues 181-228 (RRPHGCSSCDEGNAASSRCLDCQEHLCDNCVRAHQRVRLTKDHYIERG) form a B box-type 1; atypical zinc finger. The segment at 260-301 (ERLGFCQHHDDEVLHLYCDTCSVPICRECTLGRHGGHSFAYL) adopts a B box-type 2 zinc-finger fold. 4 residues coordinate Zn(2+): Cys265, His268, Cys288, and His293. Residues 378–414 (QVKAKSLYLQVEKLRQNLNKLESTISAVQQVLEEGRA) adopt a coiled-coil conformation. Residues 466 to 567 (SSGAFAPLTK…IENSPFKVVV (102 aa)) form a Filamin repeat. NHL repeat units lie at residues 580–623 (VLSF…FKPC), 627–670 (HHKF…FTFE), 674–717 (LLKF…FGPD), 721–764 (LNKY…IHPD), 768–811 (ARFL…FEAN), and 815–855 (LCKF…ILIF).

The protein belongs to the TRIM/RBCC family. Interacts (via NHL repeats) with AGO2; the interaction increases in presence of RNA. Interacts with HSP90AA1. Interacts (via NHL repeats) with MOV10, PABPC1, PUM1, PUM2, STAU2, XRN1 and XRN2 in an RNA-dependent manner. Interacts with SHCBP1; leading to enhance its stability. Post-translationally, autoubiquitinated.

It localises to the cytoplasm. It is found in the P-body. It catalyses the reaction S-ubiquitinyl-[E2 ubiquitin-conjugating enzyme]-L-cysteine + [acceptor protein]-L-lysine = [E2 ubiquitin-conjugating enzyme]-L-cysteine + N(6)-ubiquitinyl-[acceptor protein]-L-lysine.. The protein operates within protein modification; protein ubiquitination. In terms of biological role, E3 ubiquitin-protein ligase that cooperates with the microRNAs (miRNAs) machinery and promotes embryonic stem cells proliferation and maintenance. Binds to miRNAs and associates with AGO2, participating in post-transcriptional repression of transcripts such as CDKN1A. In addition, participates in post-transcriptional mRNA repression in a miRNA independent mechanism. Facilitates the G1-S transition to promote rapid embryonic stem cell self-renewal by repressing CDKN1A expression. Required to maintain proliferation and prevent premature differentiation of neural progenitor cells during early neural development: positively regulates FGF signaling by controlling the stability of SHCBP1. Specific regulator of miRNA biogenesis. Binds to miRNA MIR29A hairpin and postranscriptionally modulates MIR29A levels, which indirectly regulates TET proteins expression. The chain is E3 ubiquitin-protein ligase TRIM71 (Trim71) from Rattus norvegicus (Rat).